A 508-amino-acid polypeptide reads, in one-letter code: Kinesin light chain 3 (508 aa).

A disordered region spans residues 1 to 20 (MSVQVAAPGSTGLGPERLNP). The stretch at 88-150 (LLALSAHVSV…EEEKSHLQFL (63 aa)) forms a coiled coil. A disordered region spans residues 154–197 (RQYDPPEESQRPESPPRRDSLASLFPSEEEEKKGPEAAGAAAAQ). A compositionally biased stretch (basic and acidic residues) spans 161-173 (ESQRPESPPRRDS). Ser173 bears the Phosphoserine mark. TPR repeat units lie at residues 207–240 (LRTL…LERS), 249–282 (ATML…REQT), 291–324 (AATL…REKV), 333–366 (AKQL…YEAL), and 375–408 (AKTK…EALP). The disordered stretch occupies residues 409-441 (APLGAPQGGTAGDTQQQVLRRSSSFSKLRESIR). Positions 420–434 (GDTQQQVLRRSSSFS) are enriched in polar residues. At Ser467 the chain carries Phosphoserine. Positions 486 to 508 (LSTRHLSEAPRTLSISTQDLSPR) are disordered. Residues 498 to 508 (LSISTQDLSPR) are compositionally biased toward polar residues. A Phosphothreonine modification is found at Thr502. Residue Ser506 is modified to Phosphoserine.

This sequence belongs to the kinesin light chain family. Oligomer composed of two heavy chains and two light chains. Associates with microtubulin in an ATP-dependent manner. Interacts with KIF5C. Interacts with ODF1. Interacts with LRGUK. Interacts with VDAC2. As to expression, expressed in postmeiotic male germ cells (at protein level). Expressed in the testes (at protein level). Expressed in spleen, intestine, brain and ovary.

The protein resides in the cytoplasm. Its subcellular location is the cytoskeleton. The protein localises to the mitochondrion. Its function is as follows. Kinesin is a microtubule-associated force-producing protein that may play a role in organelle transport. Plays a role during spermiogenesis in the development of the sperm tail midpiece and in the normal function of spermatozoa. May play a role in the formation of the mitochondrial sheath formation in the developing spermatid midpiece. This is Kinesin light chain 3 (Klc3) from Mus musculus (Mouse).